A 133-amino-acid polypeptide reads, in one-letter code: Basic phospholipase A2 beta-bungarotoxin A-AL2 chain (133 aa).

A signal peptide spans 1 to 5 (FLLGA). Residues 6-13 (ANIPPHPL) constitute a propeptide that is removed on maturation. Intrachain disulfides connect cysteine 40–cysteine 132, cysteine 42–cysteine 58, cysteine 57–cysteine 113, cysteine 64–cysteine 106, cysteine 74–cysteine 99, and cysteine 92–cysteine 104. Ca(2+) contacts are provided by tyrosine 41, glycine 43, and glycine 45. Residue histidine 61 is part of the active site. Aspartate 62 contributes to the Ca(2+) binding site. Aspartate 107 is a catalytic residue.

The protein belongs to the phospholipase A2 family. Group I subfamily. D49 sub-subfamily. As to quaternary structure, heterodimer; disulfide-linked. The A chains have phospholipase A2 activity and the B chains show homology with the basic protease inhibitors. The cofactor is Ca(2+). In terms of tissue distribution, expressed by the venom gland.

The protein localises to the secreted. The enzyme catalyses a 1,2-diacyl-sn-glycero-3-phosphocholine + H2O = a 1-acyl-sn-glycero-3-phosphocholine + a fatty acid + H(+). Snake venom phospholipase A2 (PLA2) that inhibits neuromuscular transmission by blocking acetylcholine release from the nerve termini. PLA2 catalyzes the calcium-dependent hydrolysis of the 2-acyl groups in 3-sn-phosphoglycerides. This chain is Basic phospholipase A2 beta-bungarotoxin A-AL2 chain, found in Bungarus multicinctus (Many-banded krait).